A 488-amino-acid polypeptide reads, in one-letter code: Zinc finger protein 92 (488 aa).

In terms of domain architecture, KRAB spans 14–85 (VSFEDVSVYF…DDGMESAARS (72 aa)). 6 C2H2-type zinc fingers span residues 141–163 (YLCQ…RIIH), 169–191 (YECS…QRIH), 197–219 (YECG…QVIH), 225–247 (FVCR…TRIH), 253–275 (FECT…QRIH), and 281–303 (YICK…QLIH). Residues 309–331 (FTCHEYGKAFRGLSGLSQHQRVH) form a C2H2-type 7; degenerate zinc finger. The C2H2-type 8 zinc-finger motif lies at 337–359 (YECSECGRAFGRRANLFKHQVVH). The segment at 387–408 (QQPQEAGEGSSAEPQPIDTNEK) is disordered. Residues 410–432 (QVCERCGQVFENKLLLCRHLRIH) form a C2H2-type 9 zinc finger. The segment at 435–488 (EDDKKQKPVISSTSVLEDKSLLSQHLEAQPTEESDSEGSVVFVYAEKPHGPSSP) is disordered.

This sequence belongs to the krueppel C2H2-type zinc-finger protein family. Highly expressed in pancreatic islets.

It localises to the nucleus. Its function is as follows. KRAB domain-containing zinc-finger protein that represses B1/Alu SINE transposable elements and modulates the transcription of nearby genes in a tissue-specific manner. It regulates glucose homeostasis and lipid metabolism by modulating the expression of the endocrine cell-defining transcription factor, MAFB, in pancreatic islets and, the fat metabolism regulator, ACACB, in adipose tissue and muscle. The polypeptide is Zinc finger protein 92 (Zfp92) (Mus musculus (Mouse)).